A 204-amino-acid chain; its full sequence is Leucyl/phenylalanyl-tRNA--protein transferase (204 aa).

Belongs to the L/F-transferase family.

The protein resides in the cytoplasm. The catalysed reaction is N-terminal L-lysyl-[protein] + L-leucyl-tRNA(Leu) = N-terminal L-leucyl-L-lysyl-[protein] + tRNA(Leu) + H(+). It catalyses the reaction N-terminal L-arginyl-[protein] + L-leucyl-tRNA(Leu) = N-terminal L-leucyl-L-arginyl-[protein] + tRNA(Leu) + H(+). The enzyme catalyses L-phenylalanyl-tRNA(Phe) + an N-terminal L-alpha-aminoacyl-[protein] = an N-terminal L-phenylalanyl-L-alpha-aminoacyl-[protein] + tRNA(Phe). Its function is as follows. Functions in the N-end rule pathway of protein degradation where it conjugates Leu, Phe and, less efficiently, Met from aminoacyl-tRNAs to the N-termini of proteins containing an N-terminal arginine or lysine. The chain is Leucyl/phenylalanyl-tRNA--protein transferase from Rhizobium leguminosarum bv. trifolii (strain WSM2304).